We begin with the raw amino-acid sequence, 79 residues long: Conotoxin TsMSGL-2 (79 aa).

An N-terminal signal peptide occupies residues 1–24; that stretch reads MSGLGIMVLTLLLLVFMATSHQDA. Residues 25–46 constitute a propeptide that is removed on maturation; it reads GEKQATQRDAVNVRRRRSIAGR. 3 cysteine pairs are disulfide-bonded: Cys52-Cys64, Cys56-Cys73, and Cys63-Cys77. A Leucine amide modification is found at Leu78.

This sequence belongs to the conotoxin O3 superfamily. As to expression, expressed by the venom duct.

It is found in the secreted. The chain is Conotoxin TsMSGL-2 from Conus tessulatus (Tessellate cone).